Consider the following 582-residue polypeptide: Aspartate--tRNA(Asp/Asn) ligase (582 aa).

Residue E177 coordinates L-aspartate. The tract at residues 201–204 (QLFK) is aspartate. R223 contributes to the L-aspartate binding site. ATP is bound by residues 223-225 (RDE) and Q232. L-aspartate is bound at residue H447. An ATP-binding site is contributed by E481. R488 is a binding site for L-aspartate. 533-536 (GLDR) contributes to the ATP binding site.

This sequence belongs to the class-II aminoacyl-tRNA synthetase family. Type 1 subfamily. As to quaternary structure, homodimer.

It is found in the cytoplasm. The catalysed reaction is tRNA(Asx) + L-aspartate + ATP = L-aspartyl-tRNA(Asx) + AMP + diphosphate. Functionally, aspartyl-tRNA synthetase with relaxed tRNA specificity since it is able to aspartylate not only its cognate tRNA(Asp) but also tRNA(Asn). Reaction proceeds in two steps: L-aspartate is first activated by ATP to form Asp-AMP and then transferred to the acceptor end of tRNA(Asp/Asn). In Chlamydia trachomatis serovar L2 (strain ATCC VR-902B / DSM 19102 / 434/Bu), this protein is Aspartate--tRNA(Asp/Asn) ligase.